Reading from the N-terminus, the 462-residue chain is Cytochrome b558/566 subunit A (462 aa).

Over 1–8 (MSLKIKSK) the chain is Cytoplasmic. Residues 9-26 (ITIGVLLIIFLLSIIFTL) traverse the membrane as a helical segment. Residues 27 to 431 (ENVSLAQTSP…TSTSPVTTIS (405 aa)) lie on the Extracellular side of the membrane. N-linked (GlcNAc...) asparagine glycosylation is found at asparagine 28, asparagine 65, asparagine 91, asparagine 121, asparagine 144, asparagine 164, asparagine 174, asparagine 183, asparagine 211, asparagine 278, asparagine 279, asparagine 293, asparagine 316, asparagine 339, asparagine 353, and asparagine 376. Residues 432–456 (SAIPPVTLYVTIIGVVVALVALVIL) form a helical membrane-spanning segment. The Cytoplasmic segment spans residues 457 to 462 (YVVFRR).

Heme serves as cofactor. In terms of processing, N-glycosylated on at least seven Asn residues by identical hexasaccharide units composed of Man, GlcNAc, Glc and 6-deoxy-6-sulfoglucose residues in the molar ration of 2:2:1:1. O-glycosylated on probably as many as 35 positions by single Man residues.

It localises to the cell membrane. Monoheme cytochrome whose physiological function is not yet clear. The chain is Cytochrome b558/566 subunit A (cbsA) from Sulfolobus acidocaldarius (strain ATCC 33909 / DSM 639 / JCM 8929 / NBRC 15157 / NCIMB 11770).